The following is a 338-amino-acid chain: Formamidase (338 aa).

The 243-residue stretch at 15–257 (VVIGLAQLAL…DEIVCCELRP (243 aa)) folds into the CN hydrolase domain. The active-site Proton acceptor is Glu-61. Catalysis depends on Lys-130, which acts as the Proton donor. Catalysis depends on Cys-163, which acts as the Nucleophile.

The protein belongs to the carbon-nitrogen hydrolase superfamily. Aliphatic amidase family.

The enzyme catalyses formamide + H2O = formate + NH4(+). In terms of biological role, is an aliphatic amidase with a restricted substrate specificity, as it only hydrolyzes formamide. This chain is Formamidase, found in Pseudomonas syringae pv. syringae (strain B728a).